A 437-amino-acid polypeptide reads, in one-letter code: O-methyltransferase 10 (437 aa).

The S-adenosyl-L-methionine site is built by glycine 259, glutamate 282, asparagine 315, and methionine 316. The active-site Proton acceptor is histidine 335.

Belongs to the class I-like SAM-binding methyltransferase superfamily. Cation-independent O-methyltransferase family. COMT subfamily.

It carries out the reaction (3,5-dichloro-2,4,6-trihydroxyphenyl)hexan-1-one + S-adenosyl-L-methionine = 1-(3,5-dichloro-2,6-dihydroxy-4-methoxyphenyl)hexan-1-one + S-adenosyl-L-homocysteine + H(+). The polypeptide is O-methyltransferase 10 (omt10) (Dictyostelium discoideum (Social amoeba)).